Reading from the N-terminus, the 85-residue chain is Small ribosomal subunit protein eS21 (85 aa).

It belongs to the eukaryotic ribosomal protein eS21 family. Component of the 40S small ribosomal subunit.

It localises to the cytoplasm. Its subcellular location is the cytosol. The protein resides in the rough endoplasmic reticulum. The polypeptide is Small ribosomal subunit protein eS21 (rps-21) (Pectinaria gouldii (Trumpet worm)).